Here is a 357-residue protein sequence, read N- to C-terminus: UDP-N-acetylglucosamine--N-acetylmuramyl-(pentapeptide) pyrophosphoryl-undecaprenol N-acetylglucosamine transferase (357 aa).

Residues 13-15, Arg-166, Ser-196, and Gln-291 contribute to the UDP-N-acetyl-alpha-D-glucosamine site; that span reads SAG.

This sequence belongs to the glycosyltransferase 28 family. MurG subfamily.

The protein resides in the cell membrane. It catalyses the reaction di-trans,octa-cis-undecaprenyl diphospho-N-acetyl-alpha-D-muramoyl-L-alanyl-D-glutamyl-meso-2,6-diaminopimeloyl-D-alanyl-D-alanine + UDP-N-acetyl-alpha-D-glucosamine = di-trans,octa-cis-undecaprenyl diphospho-[N-acetyl-alpha-D-glucosaminyl-(1-&gt;4)]-N-acetyl-alpha-D-muramoyl-L-alanyl-D-glutamyl-meso-2,6-diaminopimeloyl-D-alanyl-D-alanine + UDP + H(+). It functions in the pathway cell wall biogenesis; peptidoglycan biosynthesis. Functionally, cell wall formation. Catalyzes the transfer of a GlcNAc subunit on undecaprenyl-pyrophosphoryl-MurNAc-pentapeptide (lipid intermediate I) to form undecaprenyl-pyrophosphoryl-MurNAc-(pentapeptide)GlcNAc (lipid intermediate II). The polypeptide is UDP-N-acetylglucosamine--N-acetylmuramyl-(pentapeptide) pyrophosphoryl-undecaprenol N-acetylglucosamine transferase (Clostridium perfringens (strain SM101 / Type A)).